The following is a 94-amino-acid chain: Pyrimidine/purine nucleoside phosphorylase (94 aa).

This sequence belongs to the nucleoside phosphorylase PpnP family.

It carries out the reaction a purine D-ribonucleoside + phosphate = a purine nucleobase + alpha-D-ribose 1-phosphate. It catalyses the reaction adenosine + phosphate = alpha-D-ribose 1-phosphate + adenine. The enzyme catalyses cytidine + phosphate = cytosine + alpha-D-ribose 1-phosphate. The catalysed reaction is guanosine + phosphate = alpha-D-ribose 1-phosphate + guanine. It carries out the reaction inosine + phosphate = alpha-D-ribose 1-phosphate + hypoxanthine. It catalyses the reaction thymidine + phosphate = 2-deoxy-alpha-D-ribose 1-phosphate + thymine. The enzyme catalyses uridine + phosphate = alpha-D-ribose 1-phosphate + uracil. The catalysed reaction is xanthosine + phosphate = alpha-D-ribose 1-phosphate + xanthine. In terms of biological role, catalyzes the phosphorolysis of diverse nucleosides, yielding D-ribose 1-phosphate and the respective free bases. Can use uridine, adenosine, guanosine, cytidine, thymidine, inosine and xanthosine as substrates. Also catalyzes the reverse reactions. This Salmonella typhimurium (strain LT2 / SGSC1412 / ATCC 700720) protein is Pyrimidine/purine nucleoside phosphorylase.